Reading from the N-terminus, the 480-residue chain is Protein nucleotidyltransferase YdiU (480 aa).

The ATP site is built by Gly86, Gly88, Arg89, Lys109, Asp121, Gly122, Arg172, and Arg179. Catalysis depends on Asp248, which acts as the Proton acceptor. Residues Asn249 and Asp258 each contribute to the Mg(2+) site. Asp258 is a binding site for ATP.

This sequence belongs to the SELO family. It depends on Mg(2+) as a cofactor. Requires Mn(2+) as cofactor.

The catalysed reaction is L-seryl-[protein] + ATP = 3-O-(5'-adenylyl)-L-seryl-[protein] + diphosphate. It catalyses the reaction L-threonyl-[protein] + ATP = 3-O-(5'-adenylyl)-L-threonyl-[protein] + diphosphate. The enzyme catalyses L-tyrosyl-[protein] + ATP = O-(5'-adenylyl)-L-tyrosyl-[protein] + diphosphate. It carries out the reaction L-histidyl-[protein] + UTP = N(tele)-(5'-uridylyl)-L-histidyl-[protein] + diphosphate. The catalysed reaction is L-seryl-[protein] + UTP = O-(5'-uridylyl)-L-seryl-[protein] + diphosphate. It catalyses the reaction L-tyrosyl-[protein] + UTP = O-(5'-uridylyl)-L-tyrosyl-[protein] + diphosphate. In terms of biological role, nucleotidyltransferase involved in the post-translational modification of proteins. It can catalyze the addition of adenosine monophosphate (AMP) or uridine monophosphate (UMP) to a protein, resulting in modifications known as AMPylation and UMPylation. In Salmonella paratyphi C (strain RKS4594), this protein is Protein nucleotidyltransferase YdiU.